The following is a 390-amino-acid chain: Ribonucleoside-diphosphate reductase subunit M2 (390 aa).

Serine 20 is modified (phosphoserine). Phosphothreonine is present on threonine 33. Positions 49-51 (RRI) match the Cy motif. The Fe cation site is built by aspartate 139, glutamate 170, and histidine 173. The active site involves tyrosine 177. Residues glutamate 233, glutamate 267, and histidine 270 each coordinate Fe cation.

The protein belongs to the ribonucleoside diphosphate reductase small chain family. Heterodimer of a large and a small subunit. Interacts (via Cy motif and when phosphorylated at Thr-33) with CCNF; the interaction occurs exclusively in G2 and early M. Fe cation serves as cofactor. Post-translationally, phosphorylation on Ser-20 relieves the inhibitory effect on Wnt signaling. Phosphorylated on Thr-33 by CDK1 and CDK2; predominantly in G2 and M phase. Ubiquitinated by the SCF(CCNF) E3 ubiquitin-protein ligase complex; leading to its degradation by the proteasome.

It is found in the cytoplasm. Its subcellular location is the nucleus. The catalysed reaction is a 2'-deoxyribonucleoside 5'-diphosphate + [thioredoxin]-disulfide + H2O = a ribonucleoside 5'-diphosphate + [thioredoxin]-dithiol. Provides the precursors necessary for DNA synthesis. Catalyzes the biosynthesis of deoxyribonucleotides from the corresponding ribonucleotides. Inhibits Wnt signaling. The sequence is that of Ribonucleoside-diphosphate reductase subunit M2 (Rrm2) from Rattus norvegicus (Rat).